The chain runs to 299 residues: uncharacterized protein (299 aa).

Over residues Met1 to Leu10 the composition is skewed to polar residues. 3 disordered regions span residues Met1 to Asn30, Lys54 to Asn89, and Gln148 to Val212. Low complexity predominate over residues Asn56 to Asn89. Acidic residues-rich tracts occupy residues Tyr150–Glu169 and Glu177–Val212.

This is an uncharacterized protein from Dictyostelium discoideum (Social amoeba).